Reading from the N-terminus, the 354-residue chain is MTELKNDRYLRALLRQPVDVTPVWMMRQAGRYLPEYKATRAQAGDFMSLCKNAELACEVTLQPLRRYPLDAAILFSDILTVPDAMGLGLYFEAGEGPRFTSPVTCKADVDKLPIPDPEDELGYVMNAVRTIRRELKGEVPLIGFSGSPWTLATYMVEGGSSKAFTVIKKMMYADPQALHALLDKLAKSVTLYLNAQIKAGAQAVMIFDTWGGVLTGRDYQQFSLYYMHKIVDGLLRENDGRRVPVTLFTKGGGQWLEAMAETGCDALGLDWTTDIADARRRVGNKVALQGNMDPSMLYAPPARIEEEVASILAGFGHGEGHVFNLGHGIHQDVPPEHAGVFVEAVHRLSEQYHR.

Substrate-binding positions include 27–31 (RQAGR), Asp77, Tyr154, Thr209, and His327.

The protein belongs to the uroporphyrinogen decarboxylase family. Homodimer.

It is found in the cytoplasm. It carries out the reaction uroporphyrinogen III + 4 H(+) = coproporphyrinogen III + 4 CO2. It functions in the pathway porphyrin-containing compound metabolism; protoporphyrin-IX biosynthesis; coproporphyrinogen-III from 5-aminolevulinate: step 4/4. Functionally, catalyzes the decarboxylation of four acetate groups of uroporphyrinogen-III to yield coproporphyrinogen-III. The sequence is that of Uroporphyrinogen decarboxylase from Escherichia coli (strain UTI89 / UPEC).